Reading from the N-terminus, the 551-residue chain is Fusion glycoprotein F0 (551 aa).

A signal peptide spans 1-23 (MHHLHPMIVCIFVMYTGIVGSDA). The Extracellular segment spans residues 24-492 (IAGDQLLNIG…TAKTLYSLSA (469 aa)). Residues Asn65, Asn69, Asn77, and Asn90 are each glycosylated (N-linked (GlcNAc...) asparagine; by host). Disulfide bonds link Cys68–Cys189, Cys328–Cys337, Cys352–Cys360, Cys384–Cys389, and Cys391–Cys414. The fusion peptide stretch occupies residues 107-131 (FAGVVVGLAALGVATAAQITAAVAI). Positions 132–160 (VKANANAAAINNLASSIQSTNKAVSDVID) form a coiled coil. Asn431 and Asn461 each carry an N-linked (GlcNAc...) asparagine; by host glycan. Residues 456 to 481 (QINSINKSLKSAEDWIADSNFFANQA) adopt a coiled-coil conformation. The chain crosses the membrane as a helical span at residues 493-513 (IALILSVITLVVVGLLIAYII). Topologically, residues 514–551 (KLVSQIHQFRSLAATTMFHRENPAFFSKNNHGNIYGIS) are cytoplasmic.

The protein belongs to the paramyxoviruses fusion glycoprotein family. As to quaternary structure, homotrimer of disulfide-linked F1-F2. Post-translationally, the inactive precursor F0 is glycosylated and proteolytically cleaved into F1 and F2 to be functionally active. The cleavage is mediated by cellular proteases during the transport and maturation of the polypeptide.

The protein resides in the virion membrane. It is found in the host cell membrane. In terms of biological role, class I viral fusion protein. Under the current model, the protein has at least 3 conformational states: pre-fusion native state, pre-hairpin intermediate state, and post-fusion hairpin state. During viral and plasma cell membrane fusion, the heptad repeat (HR) regions assume a trimer-of-hairpins structure, positioning the fusion peptide in close proximity to the C-terminal region of the ectodomain. The formation of this structure appears to drive apposition and subsequent fusion of viral and plasma cell membranes. Directs fusion of viral and cellular membranes leading to delivery of the nucleocapsid into the cytoplasm. This fusion is pH independent and occurs directly at the outer cell membrane. The trimer of F1-F2 (F protein) probably interacts with HN at the virion surface. Upon HN binding to its cellular receptor, the hydrophobic fusion peptide is unmasked and interacts with the cellular membrane, inducing the fusion between cell and virion membranes. Later in infection, F proteins expressed at the plasma membrane of infected cells could mediate fusion with adjacent cells to form syncytia, a cytopathic effect that could lead to tissue necrosis. The protein is Fusion glycoprotein F0 (F) of Homo sapiens (Human).